A 443-amino-acid chain; its full sequence is Fatty acid desaturase 3 (443 aa).

The Cytoplasmic portion of the chain corresponds to 1–130 (MGGVGEPDWE…EDMKLFEAKP (130 aa)). Residues 18–95 (LPTLRWEQVR…LQPLLIGELA (78 aa)) form the Cytochrome b5 heme-binding domain. A helical membrane pass occupies residues 131–151 (AFFGLLLGHILAMEVLAWLMI). A topological domain (lumenal) is located at residue Tyr-152. A helical transmembrane segment spans residues 153-173 (MLGPGWVPSTLAALILAISQA). Over 174–259 (QSWCLQHDLG…KKKRRYLPYN (86 aa)) the chain is Cytoplasmic. The short motif at 180-184 (HDLGH) is the Histidine box-1 element. The Histidine box-2 signature appears at 217 to 221 (HFQHH). Residues 260-280 (HQHLYFFLIGPPLLTLVNFEV) traverse the membrane as a helical segment. Over 281–282 (EN) the chain is Lumenal. Residues 283-303 (LAYMLVCMQWMDLLWAASFYA) traverse the membrane as a helical segment. Position 304 (Arg-304) is a topological domain, cytoplasmic. Residues 305–325 (FLLSYIPFYGIPGALLLFVAV) form a helical membrane-spanning segment. The Lumenal portion of the chain corresponds to 326–443 (RVLESHWFVW…NVWLEAYLHQ (118 aa)). Residues 381–385 (QIEHH) carry the Histidine box-3 motif.

The protein belongs to the fatty acid desaturase type 1 family.

It localises to the endoplasmic reticulum membrane. It carries out the reaction an N-acylsphing-4-enine + 2 Fe(II)-[cytochrome b5] + O2 + 2 H(+) = an N-acyl-sphinga-4E,14Z-dienine + 2 Fe(III)-[cytochrome b5] + 2 H2O. It catalyses the reaction N-(hexanoyl)sphing-4-enine + 2 Fe(II)-[cytochrome b5] + O2 + 2 H(+) = N-hexanoyl-sphinga-4E,14Z-dienine + 2 Fe(III)-[cytochrome b5] + 2 H2O. The enzyme catalyses sphing-4-enine + 2 Fe(II)-[cytochrome b5] + O2 + 2 H(+) = sphinga-4E,14Z-dienine + 2 Fe(III)-[cytochrome b5] + 2 H2O. The catalysed reaction is (11E)-octadecenoyl-CoA + 2 Fe(II)-[cytochrome b5] + O2 + 2 H(+) = (11E,13Z)-octadecadienoyl-CoA + 2 Fe(III)-[cytochrome b5] + 2 H2O. It carries out the reaction N-acyl-1-deoxysphinganine + 2 Fe(II)-[cytochrome b5] + O2 + 2 H(+) = N-acyl-1-deoxysphing-14Z-enine + 2 Fe(III)-[cytochrome b5] + 2 H2O. It catalyses the reaction an N-acylsphinganine + 2 Fe(II)-[cytochrome b5] + O2 + 2 H(+) = an N-acylsphing-14Z-enine + 2 Fe(III)-[cytochrome b5] + 2 H2O. It functions in the pathway lipid metabolism; polyunsaturated fatty acid biosynthesis. The protein operates within lipid metabolism; sphingolipid metabolism. Functionally, mammals have different sphingoid bases that differ in their length and/or pattern of desaturation and hydroxyl groups. The predominant sphingoid base that comprises mammalian ceramides is sphing-4-enine (sphingosine or SPH) which has a trans (E) desaturation at carbon 4. FADS3 is a desaturase that introduces a cis (Z) double bond between carbon 14 and carbon 15 of the sphingoid base (also known as long chain base, LCB), producing LCBs such as sphinga-4,14-dienine (SPD, d18:2(4E,14Z)) from SPH. Prefers SPH-containing ceramides (N-acylsphing-4-enines) as substrates. Capable of metabolizing also the SPH in its free form. SPD ceramides occur widely in mammalian tissues and cells. Due to their unusual structure containing a cis double bond, SPD ceramides may have an opposite, negative role in lipid microdomain formation relative to conventional ceramides. Could be involved in the detoxification of 1-deoxy sphingolipids, by desaturating the cytotoxic 1-deoxysphinganine (1-deoxySA, m18:0), produced under pathological conditions, to 1-deoxysphingenine (1-deoxysphingosine, 1-deoxySO, m18:1). Although prefers SPH-containing ceramides (N-acylsphing-4-enines) as substrates, it also exhibits activity toward dihydrosphingosine-containing CERs (N-acylsphinganines) and produces 14Z-SPH-containing sphingolipids. Its desaturase mechanism involves an electron transfer facilitated by cytochrome b5. FADS3 also acts as a methyl-end fatty acyl coenzyme A (CoA) desaturase that introduces a cis double bond between the preexisting double bond and the terminal methyl group of the fatty acyl chain. Desaturates (11E)-octadecenoate (trans-vaccenoate, the predominant trans fatty acid in human milk) at carbon 13 to generate (11E,13Z)-octadecadienoate (also known as conjugated linoleic acid 11E,13Z-CLA). In Bos taurus (Bovine), this protein is Fatty acid desaturase 3.